Consider the following 1117-residue polypeptide: Protein cup (1117 aa).

The disordered stretch occupies residues 1-106 (MQMAEAEQEN…PPPPPPLPTS (106 aa)). 2 stretches are compositionally biased toward pro residues: residues 54 to 64 (YPPPPPPPTPV) and 95 to 104 (CAPPPPPPLP). Residues serine 263 and serine 270 each carry the phosphoserine modification. The interval 270 to 326 (SPRKQVASKEAVPEQQSSQVQQKRPPSTGIHKPGSLRAPKAVRPTTAPVVSSKPVKS) is disordered. Positions 283–294 (EQQSSQVQQKRP) are enriched in polar residues. The YXXXXLphi motif 1 motif lies at 327–333 (YTRSRLM). A phosphoserine mark is found at serine 347 and serine 350. The short motif at 363-369 (ELEGRLR) is the YXXXXLphi motif 2 element. Disordered stretches follow at residues 493–528 (ISSQ…EDLS), 596–618 (KEGN…KMDH), 654–673 (TEHQ…SFQF), 679–728 (SQQN…SSSS), 984–1004 (GAKH…QARP), and 1016–1051 (ISGG…FQSF). Phosphothreonine is present on threonine 503. Residues serine 509, serine 513, serine 520, serine 523, and serine 524 each carry the phosphoserine modification. Composition is skewed to low complexity over residues 679-712 (SQQN…NTNN) and 988-1001 (QAQQ…QQRQ).

The protein belongs to the 4E-T/EIF4E-T family. As to quaternary structure, component of the osk RNP complex, which is composed of at least exu, yps, aret/bruno, cup, and the mRNA of osk. Interacts with the decapping activators me31B and tral. Component of the nanos RNP complex, which is composed of at least smg, cup, tral, me31B, the CCR4-NOT complex members Rga/NOT2 and Caf1, and the mRNA of nanos (nos). Interacts with btz. Recruited to the 3'-UTR of nos and osk mRNAs by smg and btz, respectively. Forms a ribonucleoprotein complex (RNP) containing at least me31B, eIF4E1, cup, tral and pAbp; this interaction is required for the translational silencing of maternal mRNAs during the maternal-to-zygotic transition. No interaction was detected with pAbp in 1-5 hour embryos. Interacts with osk and vas. Interacts with Pop2, twin/CCR4, Rga, Not3 and Not1 which are all core components of the CCR4-NOT deadenylase complex; interaction with the complex is required for cup deadenylation activity. Interacts with nanos. Interacts with smg. Interacts (via YXXXXLphi motifs) with eIF4E1; the interaction promotes retention of cup in the cytoplasm. Interacts with orb; the interaction represses the orb positive autoregulatory loop. Interacts with Nup154. Predominantly expressed in ovaries and in 0-2 hours old embryos. Weakly expressed in testis. Expressed in young embryos through stage 9, then it decreases throughout the rest of embryogenesis. In ovaries, it is expressed in germ cells throughout pre-vitellogenic development, but is not expressed in the somatic follicle cells. In germarial cysts, the protein (and not the transcripts) is transported selectively into the oocyte.

The protein resides in the cytoplasm. Its subcellular location is the nucleus. It localises to the cytoplasmic ribonucleoprotein granule. Its function is as follows. Adapter protein that plays a central role in localization of transcripts in the oocyte and in young embryos. Maintains RNA targets in a repressed state by promoting their deadenylation and protects deadenylated mRNAs from further degradation. Binds to and recruits eIF-4E to the 3'-UTR of some mRNA targets which prevents interaction between eIF4E1 and eIF4G. This may contribute to translational repression but does not appear to be necessary for it to occur. Can promote translational repression independently of deadenylation and eIF4E1 binding. Required for correct localization of eIF4E1 in the developing oocyte. Required for translational repression of oskar (osk) mRNA. Also required for the translational repression of nanos (nos) mRNA. Promotes the accumulation of the germ plasm components osk, vas and stau at the posterior pole of the oocyte and is required for germ cell development. Represses orb positive autoregulatory activity which prevents premature activation of orb and ensures its accumulation specifically in the developing oocyte. In 0-1 hour embryos, forms a complex with me31B, cup, tral and pAbp which binds to various mRNAs including maternal mRNAs, and down-regulates their expression during the maternal-to-zygotic transition. This Drosophila melanogaster (Fruit fly) protein is Protein cup (cup).